A 390-amino-acid chain; its full sequence is Zinc transporter 7-B (390 aa).

The Cytoplasmic segment spans residues 1-37; the sequence is MLPLSIKDDEYKPPKFNLVRKVSGWIRSIFSDSTSRN. The chain crosses the membrane as a helical span at residues 38–58; that stretch reads LFCFLCLNLSFAFVELFYGIW. Over 59 to 67 the chain is Lumenal; the sequence is SNSLGLISD. The helical transmembrane segment at 68 to 88 threads the bilayer; sequence SFHMFFDCTALLAGLAASVIS. At 89–102 the chain is on the cytoplasmic side; that stretch reads RWKTNETFSYGYVR. Residues 103-123 traverse the membrane as a helical segment; sequence AEVLAGFVNGLFLIFTAFFIF. Topologically, residues 124–140 are lumenal; it reads SEGIERALDTPEVHHER. The chain crosses the membrane as a helical span at residues 141 to 161; it reads LLPVSIMGFLVNLIGIFVFQH. The tract at residues 161 to 226 is his-rich loop; the sequence is HGGGHGHSHE…GHDHSHKHGH (66 aa). Over 162–250 the chain is Cytoplasmic; sequence GGGHGHSHES…KGSSKQILEG (89 aa). Residues 166–243 are disordered; that stretch reads GHSHESGHGH…DEPPEENKGS (78 aa). The segment covering 187 to 201 has biased composition (basic residues); it reads GHSHSHGGGHGHSHG. 2 stretches are compositionally biased toward basic and acidic residues: residues 202 to 218 and 232 to 242; these read GGHE…EHGH and CHDEPPEENKG. Residues 251-271 traverse the membrane as a helical segment; the sequence is VFLHIVADALGSVGVIISTIL. The Lumenal segment spans residues 272–276; the sequence is MQQYG. The helical transmembrane segment at 277–297 threads the bilayer; sequence LMIADPICSMLIALLIFVSVI. At 298–390 the chain is on the cytoplasmic side; sequence PLLKQSIGIL…LYVQIDLAAM (93 aa).

Belongs to the cation diffusion facilitator (CDF) transporter (TC 2.A.4) family. SLC30A subfamily. Homooligomer.

Its subcellular location is the golgi apparatus membrane. It localises to the cytoplasmic vesicle. The protein localises to the golgi apparatus. It is found in the trans-Golgi network. The protein resides in the sarcoplasmic reticulum. Its subcellular location is the mitochondrion. The enzyme catalyses Zn(2+)(in) = Zn(2+)(out). In terms of biological role, zinc ion transporter mediating zinc entry from the cytosol into the lumen of organelles along the secretory pathway. By contributing to zinc ion homeostasis within the early secretory pathway, regulates the activation and folding of enzymes like alkaline phosphatases. The chain is Zinc transporter 7-B (slc30a7-b) from Xenopus laevis (African clawed frog).